Consider the following 405-residue polypeptide: NADH-quinone oxidoreductase subunit D (405 aa).

This sequence belongs to the complex I 49 kDa subunit family. NDH-1 is composed of 14 different subunits. Subunits NuoB, C, D, E, F, and G constitute the peripheral sector of the complex.

The protein resides in the cell inner membrane. The catalysed reaction is a quinone + NADH + 5 H(+)(in) = a quinol + NAD(+) + 4 H(+)(out). NDH-1 shuttles electrons from NADH, via FMN and iron-sulfur (Fe-S) centers, to quinones in the respiratory chain. The immediate electron acceptor for the enzyme in this species is believed to be ubiquinone. Couples the redox reaction to proton translocation (for every two electrons transferred, four hydrogen ions are translocated across the cytoplasmic membrane), and thus conserves the redox energy in a proton gradient. The protein is NADH-quinone oxidoreductase subunit D of Leptospira borgpetersenii serovar Hardjo-bovis (strain L550).